Consider the following 155-residue polypeptide: Low molecular weight phosphotyrosine protein phosphatase 1 (155 aa).

The active-site Nucleophile is Cys9. Arg15 is a catalytic residue. The Proton donor role is filled by Asp124.

The protein belongs to the low molecular weight phosphotyrosine protein phosphatase family. As to expression, cone cells and primary pigment cells in developing pupal retina.

It localises to the cytoplasm. The catalysed reaction is O-phospho-L-tyrosyl-[protein] + H2O = L-tyrosyl-[protein] + phosphate. The enzyme catalyses a phosphate monoester + H2O = an alcohol + phosphate. Its function is as follows. Acts on tyrosine phosphorylated proteins, low-MW aryl phosphates and natural and synthetic acyl phosphates. This chain is Low molecular weight phosphotyrosine protein phosphatase 1 (primo-1), found in Drosophila melanogaster (Fruit fly).